The primary structure comprises 241 residues: Caffeoyl-CoA O-methyltransferase (241 aa).

A substrate-binding site is contributed by K14. S-adenosyl-L-methionine is bound by residues T58, E80, 82-83 (GV), S88, D106, and A135. D158 contributes to the substrate binding site. Residue D158 coordinates a divalent metal cation. D160 serves as a coordination point for S-adenosyl-L-methionine. 2 residues coordinate a divalent metal cation: D184 and N185.

This sequence belongs to the class I-like SAM-binding methyltransferase superfamily. Cation-dependent O-methyltransferase family. CCoAMT subfamily. A divalent metal cation is required as a cofactor.

It carries out the reaction (E)-caffeoyl-CoA + S-adenosyl-L-methionine = (E)-feruloyl-CoA + S-adenosyl-L-homocysteine + H(+). It functions in the pathway aromatic compound metabolism; phenylpropanoid biosynthesis. Functionally, methylates caffeoyl-CoA to feruloyl-CoA and 5-hydroxyferuloyl-CoA to sinapoyl-CoA. Plays a role in the synthesis of feruloylated polysaccharides. Involved in the reinforcement of the plant cell wall. Also involved in the responding to wounding or pathogen challenge by the increased formation of cell wall-bound ferulic acid polymers. In Stellaria longipes (Longstalk starwort), this protein is Caffeoyl-CoA O-methyltransferase.